Consider the following 498-residue polypeptide: ATP synthase subunit beta, chloroplastic (498 aa).

An ATP-binding site is contributed by 172-179 (GGAGVGKT).

It belongs to the ATPase alpha/beta chains family. In terms of assembly, F-type ATPases have 2 components, CF(1) - the catalytic core - and CF(0) - the membrane proton channel. CF(1) has five subunits: alpha(3), beta(3), gamma(1), delta(1), epsilon(1). CF(0) has four main subunits: a(1), b(1), b'(1) and c(9-12).

Its subcellular location is the plastid. It localises to the chloroplast thylakoid membrane. It catalyses the reaction ATP + H2O + 4 H(+)(in) = ADP + phosphate + 5 H(+)(out). Functionally, produces ATP from ADP in the presence of a proton gradient across the membrane. The catalytic sites are hosted primarily by the beta subunits. This is ATP synthase subunit beta, chloroplastic from Nicotiana sylvestris (Wood tobacco).